The chain runs to 322 residues: Acetyl-coenzyme A carboxylase carboxyl transferase subunit alpha (322 aa).

The region spanning 39–293 is the CoA carboxyltransferase C-terminal domain; it reads RLASKSQQLT…KRALAESLRQ (255 aa).

It belongs to the AccA family. Acetyl-CoA carboxylase is a heterohexamer composed of biotin carboxyl carrier protein (AccB), biotin carboxylase (AccC) and two subunits each of ACCase subunit alpha (AccA) and ACCase subunit beta (AccD).

It is found in the cytoplasm. It catalyses the reaction N(6)-carboxybiotinyl-L-lysyl-[protein] + acetyl-CoA = N(6)-biotinyl-L-lysyl-[protein] + malonyl-CoA. It functions in the pathway lipid metabolism; malonyl-CoA biosynthesis; malonyl-CoA from acetyl-CoA: step 1/1. Functionally, component of the acetyl coenzyme A carboxylase (ACC) complex. First, biotin carboxylase catalyzes the carboxylation of biotin on its carrier protein (BCCP) and then the CO(2) group is transferred by the carboxyltransferase to acetyl-CoA to form malonyl-CoA. The chain is Acetyl-coenzyme A carboxylase carboxyl transferase subunit alpha from Ralstonia pickettii (strain 12J).